The primary structure comprises 209 residues: Ribosomal RNA large subunit methyltransferase E (209 aa).

Gly63, Trp65, Asp83, Asp99, and Asp124 together coordinate S-adenosyl-L-methionine. Residue Lys164 is the Proton acceptor of the active site.

Belongs to the class I-like SAM-binding methyltransferase superfamily. RNA methyltransferase RlmE family.

The protein resides in the cytoplasm. It carries out the reaction uridine(2552) in 23S rRNA + S-adenosyl-L-methionine = 2'-O-methyluridine(2552) in 23S rRNA + S-adenosyl-L-homocysteine + H(+). Specifically methylates the uridine in position 2552 of 23S rRNA at the 2'-O position of the ribose in the fully assembled 50S ribosomal subunit. This is Ribosomal RNA large subunit methyltransferase E from Shewanella oneidensis (strain ATCC 700550 / JCM 31522 / CIP 106686 / LMG 19005 / NCIMB 14063 / MR-1).